We begin with the raw amino-acid sequence, 282 residues long: Bifunctional protein FolD (282 aa).

NADP(+) contacts are provided by residues 166–168 (GAS) and Ile232.

The protein belongs to the tetrahydrofolate dehydrogenase/cyclohydrolase family. In terms of assembly, homodimer.

The catalysed reaction is (6R)-5,10-methylene-5,6,7,8-tetrahydrofolate + NADP(+) = (6R)-5,10-methenyltetrahydrofolate + NADPH. The enzyme catalyses (6R)-5,10-methenyltetrahydrofolate + H2O = (6R)-10-formyltetrahydrofolate + H(+). The protein operates within one-carbon metabolism; tetrahydrofolate interconversion. Functionally, catalyzes the oxidation of 5,10-methylenetetrahydrofolate to 5,10-methenyltetrahydrofolate and then the hydrolysis of 5,10-methenyltetrahydrofolate to 10-formyltetrahydrofolate. In Haemophilus influenzae (strain PittEE), this protein is Bifunctional protein FolD.